The following is a 481-amino-acid chain: Cysteine--tRNA ligase (481 aa).

Cys43 contacts Zn(2+). A 'HIGH' region motif is present at residues Ala45 to His55. Residues Cys221, His246, and Glu250 each contribute to the Zn(2+) site. The 'KMSKS' region motif lies at Lys277–Ser281. Lys280 contacts ATP.

This sequence belongs to the class-I aminoacyl-tRNA synthetase family. As to quaternary structure, monomer. Zn(2+) is required as a cofactor.

The protein resides in the cytoplasm. The enzyme catalyses tRNA(Cys) + L-cysteine + ATP = L-cysteinyl-tRNA(Cys) + AMP + diphosphate. The polypeptide is Cysteine--tRNA ligase (Mycobacterium sp. (strain JLS)).